A 242-amino-acid chain; its full sequence is Probable 2-phosphosulfolactate phosphatase (242 aa).

Belongs to the ComB family. Mg(2+) serves as cofactor.

It carries out the reaction (2R)-O-phospho-3-sulfolactate + H2O = (2R)-3-sulfolactate + phosphate. This chain is Probable 2-phosphosulfolactate phosphatase, found in Synechococcus sp. (strain JA-3-3Ab) (Cyanobacteria bacterium Yellowstone A-Prime).